Here is a 392-residue protein sequence, read N- to C-terminus: 6-aminohexanoate-dimer hydrolase (392 aa).

Residues 1 to 27 are disordered; that stretch reads MNTPTTGSHPARYPSAAAGEPTLDSWQ. Residue Ser112 is part of the active site.

The enzyme catalyses [N-(6-aminohexanoyl)](n) + H2O = [N-(6-aminohexanoyl)](n-1) + 6-aminohexanoate. It catalyses the reaction N-(6-aminohexanoyl)-6-aminohexanoate + H2O = 2 6-aminohexanoate. It functions in the pathway xenobiotic degradation; nylon-6 oligomer degradation. Functionally, involved in nylon oligomer degradation. In Paenarthrobacter ureafaciens, this protein is 6-aminohexanoate-dimer hydrolase.